Consider the following 406-residue polypeptide: MSACRGFLLRRINDSCLTFRRHKFKKKWATTLPKIPCSRLALQYFDINYSMQFGDLWPSIRISLLTEQKYGALVNNFSHKETVLNNLSALKAKDFISEAQSVISLLQTQNNVDTSEKMVFTEVPLNLVGEKNDAEQTQATNLLSSLSNSKLTCFTFSRGDISRFPQSRSDCFGLLEYYLMDAASLLPVLALDIQHGHSVLDLCAAPGGKTLALLQTENCQYLAANDLSTSRSSRLHRVLHSYVPRDQRAEHKVRITSWDGRLWGDLEASTYDRVLVDVPCTTDRHSLLEEENNIFHRIRTKQRQMLPLLQTELLVSGLRAVRPGGEVVYSTCSLSQLQNECVVQRAIELAATDHGVLVKPQDLSCFREVFKNTFNFFQDCRVGELVVPHLTANFGPMFFCKLLRIK.

S-adenosyl-L-methionine is bound by residues glycine 207, glycine 208, lysine 209, aspartate 226, arginine 231, aspartate 259, glycine 260, and aspartate 277. Residue cysteine 332 is the Nucleophile of the active site.

The protein belongs to the class I-like SAM-binding methyltransferase superfamily. RsmB/NOP family.

The protein resides in the mitochondrion. The enzyme catalyses a cytidine in rRNA + S-adenosyl-L-methionine = a 5-methylcytidine in rRNA + S-adenosyl-L-homocysteine + H(+). It carries out the reaction a cytidine in mRNA + S-adenosyl-L-methionine = a 5-methylcytidine in mRNA + S-adenosyl-L-homocysteine + H(+). Functionally, mitochondrial RNA cytosine C(5)-methyltransferase that methylates cytosine to 5-methylcytosine (m5C) in various RNAs, such as rRNAs, mRNAs and some long non-coding RNAs (lncRNAs). Involved in mitochondrial ribosome small subunit (SSU) maturation by catalyzing methylation of mitochondrial 12S rRNA. This is 5-cytosine rRNA methyltransferase NSUN4 (nsun4) from Xenopus laevis (African clawed frog).